A 127-amino-acid chain; its full sequence is MLQLLLAVFIGGGTGSVARWLLSMRFNPLHQAIPLGTLTANLIGAFIIGMGFAWFSRMTNIDPVWKVLITTGFCGGLTTFSTFSAEVVFLLQEGRFGWALLNVFVNLLGSFAMTALAFWLFSASTAH.

4 helical membrane passes run 4–24 (LLLA…LLSM), 35–55 (LGTL…FAWF), 71–91 (TGFC…VFLL), and 103–123 (VFVN…LFSA). 2 residues coordinate Na(+): glycine 75 and threonine 78.

It belongs to the fluoride channel Fluc/FEX (TC 1.A.43) family.

It localises to the cell inner membrane. The catalysed reaction is fluoride(in) = fluoride(out). Its activity is regulated as follows. Na(+) is not transported, but it plays an essential structural role and its presence is essential for fluoride channel function. Functionally, fluoride-specific ion channel. Important for reducing fluoride concentration in the cell, thus reducing its toxicity. The protein is Fluoride-specific ion channel FluC of Escherichia coli (strain ATCC 8739 / DSM 1576 / NBRC 3972 / NCIMB 8545 / WDCM 00012 / Crooks).